We begin with the raw amino-acid sequence, 84 residues long: ATP synthase subunit c (84 aa).

A run of 2 helical transmembrane segments spans residues 9–29 (IIGA…GFAI) and 54–74 (IVAG…LLFI).

This sequence belongs to the ATPase C chain family. F-type ATPases have 2 components, F(1) - the catalytic core - and F(0) - the membrane proton channel. F(1) has five subunits: alpha(3), beta(3), gamma(1), delta(1), epsilon(1). F(0) has three main subunits: a(1), b(2) and c(10-14). The alpha and beta chains form an alternating ring which encloses part of the gamma chain. F(1) is attached to F(0) by a central stalk formed by the gamma and epsilon chains, while a peripheral stalk is formed by the delta and b chains.

Its subcellular location is the cell inner membrane. In terms of biological role, f(1)F(0) ATP synthase produces ATP from ADP in the presence of a proton or sodium gradient. F-type ATPases consist of two structural domains, F(1) containing the extramembraneous catalytic core and F(0) containing the membrane proton channel, linked together by a central stalk and a peripheral stalk. During catalysis, ATP synthesis in the catalytic domain of F(1) is coupled via a rotary mechanism of the central stalk subunits to proton translocation. Key component of the F(0) channel; it plays a direct role in translocation across the membrane. A homomeric c-ring of between 10-14 subunits forms the central stalk rotor element with the F(1) delta and epsilon subunits. The polypeptide is ATP synthase subunit c (Glaesserella parasuis serovar 5 (strain SH0165) (Haemophilus parasuis)).